The following is a 244-amino-acid chain: Small ribosomal subunit protein uS2 (244 aa).

Belongs to the universal ribosomal protein uS2 family.

The sequence is that of Small ribosomal subunit protein uS2 from Buchnera aphidicola subsp. Schizaphis graminum (strain Sg).